The following is a 1358-amino-acid chain: MGIDGETVVLKNMLIGVNLILLGSMLKPSECRLEVTTERAQRQTVEEEGGASSYNTSSKEQPMVFNHVYNINVPLESLCSSGLEASAEQDMSAEDDTLAEYIGQTSDHESQVTFTHKINLPKKACPCASSSQVLQELLSRIEMLEREVSLLRDQCNTNCCQESAATGQLDYVPHCSGHGNFSFESCGCICNEGWFGKNCSEPYCPLGCSSRGVCVDGQCICDSEYSGDDCSELRCPTDCSSRGLCVDGECVCEEPYTGEDCRELRCPGDCSGKGQCANGTCLCQEGYAGEDCSQRRCLNACSGRGHCQEGLCICEEGYQGPDCSAVAPPEDLRVAGISDRSIELEWDGPMAVTEYVISYQPTALGGLQLQQRVPGDWSGVTIMELEPGLTYNISVYAVISNILSLPITAKVATHLSTPQGLQFKTITETTVEVQWEPFSFSFDGWEISFIPKNNEGGVIAQLPSDVTSFNQTGLKPGEEYIVNVVALKEQARSPPTSASVSTVIDGPTQILVRDVSDTVAFVEWTPPRAKVDFILLKYGLVGGEGGKTTFRLQPPLSQYSVQALRPGSRYEVSISAVRGTNESEASSTQFTTEIDAPKNLRVGSRTATSLDLEWDNSEAEAQEYKVVYSTLAGEQYHEVLVPKGIGPTTKTTLTDLVPGTEYGVGISAVMNSKQSIPATMNARTELDSPRDLMVTASSETSISLIWTKASGPIDHYRITFTPSSGISSEVTVPRDRTSYTLTDLEPGAEYIISITAERGRQQSLESTVDAFTGFRPISHLHFSHVTSSSVNITWSDPSPPADRLILNYSPRDKEEDMLEVLLDATKRHAVLMGLQPATEYIVNLVAVHGTVTSEPIVGSITTGIDPPKNITISNVTKDSLTVSWSSPVAPFDYYRVSYRPTQVGRLDSSVVPNTVTEFAITRLYPATEYEISLNSVRGREESERICTLVHTAMDSPMDLIATNITPTEALLQWKAPMGEVENYVIVLTHFAIAGETILVDGVSEEFQLVDLLPSTHYTVTMYATSGPLMSGTIATNFSTLLDPPDNLTASEVTRQSALISWQPPRAAIENYVLTYKSTDGSRKELIVDAEDTWIRLEGLSENTDYTVLLQAAQEATRSSLTSTVFTTGGRVFSHPQDCAQHLMNGDTLSGVYTIFLNGELSHKLQVYCDMTTDGGGWIVFQRRQNGQTDFFRKWADYRVGFGNLEDEFWLGLDNIHRITAQGRYELRVDMRDGQEAVFAYYDKFAVEDSRSLYKIRIGSYNGTAGDSLSYHQGRPFSTEDRDNDVAVTNCAMSYKGAWWYKNCHRTNLNGKYGESRHSQGINWYHWKGHEFSIPFVEMKMRPYIHRLTAGRKRRALKF.

The signal sequence occupies residues 1–31 (MGIDGETVVLKNMLIGVNLILLGSMLKPSEC). Positions 37–58 (TERAQRQTVEEEGGASSYNTSS) are disordered. N-linked (GlcNAc...) asparagine glycosylation occurs at Asn-55. The stretch at 127 to 157 (CASSSQVLQELLSRIEMLEREVSLLRDQCNT) forms a coiled coil. The O-linked (Xyl...) (chondroitin sulfate) serine glycan is linked to Ser-176. N-linked (GlcNAc...) asparagine glycosylation is found at Asn-180 and Asn-198. 3 EGF-like domains span residues 188-199 (CICNEGWFGKNC), 219-230 (CICDSEYSGDDC), and 250-261 (CVCEEPYTGEDC). An O-linked (Xyl...) (chondroitin sulfate) serine glycan is attached at Ser-271. An N-linked (GlcNAc...) asparagine glycan is attached at Asn-278. The 12-residue stretch at 281–292 (CLCQEGYAGEDC) folds into the EGF-like 4 domain. 2 disulfide bridges follow: Cys-297–Cys-307 and Cys-314–Cys-323. Ser-302 carries O-linked (Xyl...) (chondroitin sulfate) serine glycosylation. The region spanning 312-323 (CICEEGYQGPDC) is the EGF-like 5 domain. 9 Fibronectin type-III domains span residues 328–420 (PPED…TPQG), 421–505 (LQFK…TVID), 506–597 (GPTQ…IDAP), 598–687 (KNLR…TELD), 688–777 (SPRD…FRPI), 778–865 (SHLH…TGID), 866–955 (PPKN…AMDS), 956–1042 (PMDL…TLLD), and 1043–1131 (PPDN…GGRV). N-linked (GlcNAc...) asparagine glycosylation is found at Asn-392, Asn-470, and Asn-581. Ser-724 is modified (phosphoserine). Asn-791, Asn-869, Asn-874, Asn-1036, Asn-1046, and Asn-1261 each carry an N-linked (GlcNAc...) asparagine glycan. In terms of domain architecture, Fibrinogen C-terminal spans 1129 to 1344 (GRVFSHPQDC…FVEMKMRPYI (216 aa)).

The protein belongs to the tenascin family. As to quaternary structure, interacts with BCAN and ACAN in a calcium-dependent manner. Interacts with SCN2B, PTPRZ1, and CSPG3. Forms oligomers. Isoforms 1 and 2 form respectively trimeric (tribrachion) and dimeric kink-armed rodlike structures, which are linked by disulfide bridges. Interacts with CNTN1, TNC and FN1. Contains N-linked oligosaccharides with a sulfated carbohydrate structures. Contains N-linked oligosaccharides, O-linked sialylated structures and O-linked chondroitin sulfate glycosaminoglycans. In terms of tissue distribution, brain-specific.

It is found in the secreted. Its subcellular location is the extracellular space. The protein resides in the extracellular matrix. Its function is as follows. Neural extracellular matrix (ECM) protein involved in interactions with different cells and matrix components. Theses interactions can influence cellular behavior by either evoking a stable adhesion and differentiation, or repulsion and inhibition of neurite growth. Binding to cell surface gangliosides inhibits RGD-dependent integrin-mediated cell adhesion and results in an inhibition of PTK2/FAK1 (FAK) phosphorylation and cell detachment. Binding to membrane surface sulfatides results in a oligodendrocyte adhesion and differentiation. Interaction with CNTN1 induces a repulsion of neurons and an inhibition of neurite outgrowth. Interacts with SCN2B may play a crucial role in clustering and regulation of activity of sodium channels at nodes of Ranvier. TNR-linked chondroitin sulfate glycosaminoglycans are involved in the interaction with FN1 and mediates inhibition of cell adhesion and neurite outgrowth. The highly regulated addition of sulfated carbohydrate structure may modulate the adhesive properties of TNR over the course of development and during synapse maintenance. This is Tenascin-R (Tnr) from Mus musculus (Mouse).